The following is a 780-amino-acid chain: Reticulon-1 (780 aa).

Disordered regions lie at residues 1–76, 128–176, 201–223, and 293–576; these read MAAP…VAME, QKEN…AEST, RPQEAKGQEEQHPGLEDKDLDFK, and MTAT…IPGP. Phosphoserine occurs at positions 13 and 70. S327 is subject to Phosphoserine. The segment covering 328 to 341 has biased composition (low complexity); sequence PGSVTPPSSGTEPS. Residues S350, S352, and S487 each carry the phosphoserine modification. The span at 497-512 shows a compositional bias: basic and acidic residues; the sequence is AIREETGSRATEERAP. Positions 593–780 constitute a Reticulon domain; that stretch reads AIDLLYWRDI…KIPGAKRHAE (188 aa). Transmembrane regions (helical) follow at residues 607–627 and 709–729; these read IVFGSFLLLLFSLTQFSVVSV and FAVLMWLLTYVGALFNGLTLL.

Interacts with NDRG1. Interacts with BACE1. Interacts with TMEM33.

Its subcellular location is the endoplasmic reticulum membrane. It localises to the golgi apparatus membrane. Inhibits amyloid precursor protein processing, probably by blocking BACE1 activity. The sequence is that of Reticulon-1 (Rtn1) from Mus musculus (Mouse).